Here is a 126-residue protein sequence, read N- to C-terminus: Aspartate 1-decarboxylase (126 aa).

Ser-25 serves as the catalytic Schiff-base intermediate with substrate; via pyruvic acid. Ser-25 bears the Pyruvic acid (Ser) mark. Residue Thr-57 coordinates substrate. Tyr-58 (proton donor) is an active-site residue. 73–75 (GAA) provides a ligand contact to substrate.

This sequence belongs to the PanD family. Heterooctamer of four alpha and four beta subunits. Requires pyruvate as cofactor. Post-translationally, is synthesized initially as an inactive proenzyme, which is activated by self-cleavage at a specific serine bond to produce a beta-subunit with a hydroxyl group at its C-terminus and an alpha-subunit with a pyruvoyl group at its N-terminus.

The protein resides in the cytoplasm. The catalysed reaction is L-aspartate + H(+) = beta-alanine + CO2. The protein operates within cofactor biosynthesis; (R)-pantothenate biosynthesis; beta-alanine from L-aspartate: step 1/1. Catalyzes the pyruvoyl-dependent decarboxylation of aspartate to produce beta-alanine. This is Aspartate 1-decarboxylase from Saccharophagus degradans (strain 2-40 / ATCC 43961 / DSM 17024).